The primary structure comprises 141 residues: Nucleoside triphosphatase NudI (141 aa).

Residues 1–141 (MRQRTIVCPL…RHTLALKGLL (141 aa)) enclose the Nudix hydrolase domain. The Nudix box signature appears at 38 to 59 (GGVEPGERIEEALRREVREELG).

Belongs to the Nudix hydrolase family. NudI subfamily. Monomer. Requires Mg(2+) as cofactor.

It carries out the reaction a ribonucleoside 5'-triphosphate + H2O = a ribonucleoside 5'-phosphate + diphosphate + H(+). The enzyme catalyses a 2'-deoxyribonucleoside 5'-triphosphate + H2O = a 2'-deoxyribonucleoside 5'-phosphate + diphosphate + H(+). The catalysed reaction is dUTP + H2O = dUMP + diphosphate + H(+). It catalyses the reaction dTTP + H2O = dTMP + diphosphate + H(+). It carries out the reaction dCTP + H2O = dCMP + diphosphate + H(+). Its function is as follows. Catalyzes the hydrolysis of nucleoside triphosphates, with a preference for pyrimidine deoxynucleoside triphosphates (dUTP, dTTP and dCTP). In Salmonella agona (strain SL483), this protein is Nucleoside triphosphatase NudI.